An 869-amino-acid polypeptide reads, in one-letter code: Ribonucleoside-diphosphate reductase large chain 2 (869 aa).

Residues 1–92 form the ATP-cone domain; that stretch reads MYVIKRDGRK…ISNLHKQTTK (92 aa). ATP-binding positions include 5–6, 11–17, threonine 53, and aspartate 57; these read KR and EPVQFDK. Residues serine 202 and serine 217 each coordinate GDP. Cysteine 218 and cysteine 443 are joined by a disulfide. DTTP contacts are provided by residues 226–228, lysine 243, arginine 256, and 263–264; these read DSI and AG. Serine 227 is subject to Phosphoserine. A Glycyl lysine isopeptide (Lys-Gly) (interchain with G-Cter in ubiquitin) cross-link involves residue lysine 387. Asparagine 426 contacts GDP. Asparagine 426 (proton acceptor) is an active-site residue. Cysteine 428 functions as the Cysteine radical intermediate in the catalytic mechanism. GDP is bound by residues glutamate 430 and 608-611; that span reads TAST. Glutamate 430 acts as the Proton acceptor in catalysis. Residues 793 to 843 form a disordered region; it reads SALTESSDNEKDASPVPSEQSSVSSAMSNVKLEDSVAPAVPTETIKEDSDE. Serine 806, serine 827, and serine 868 each carry phosphoserine. Positions 806–820 are enriched in low complexity; that stretch reads SPVPSEQSSVSSAMS.

It belongs to the ribonucleoside diphosphate reductase large chain family. As to quaternary structure, heterotetramer of two large (R1) and two small (R2) subunits. S.cerevisiae has two different R1 subunits (RNR1 and RNR3) and two different R2 subunits (RNR2 and RNR4). The functional form of the small subunits is a RNR2-RNR4 heterodimer, where RNR2 provides the iron-radical center and RNR4 is required for proper folding of RNR2 and assembly with the large subunits. Under normal growth conditions, the active form of the large subunits is a homodimer of the constitutively expressed RNR1. In damaged cells or cells arrested for DNA synthesis, the reductase consists of multiple species because of the association of the small subunits (RNR2-RNR4) with either the RNR1 homodimer or a heterodimer of RNR1 and the damage-inducible RNR3.

It localises to the cytoplasm. It carries out the reaction a 2'-deoxyribonucleoside 5'-diphosphate + [thioredoxin]-disulfide + H2O = a ribonucleoside 5'-diphosphate + [thioredoxin]-dithiol. Its activity is regulated as follows. Under complex allosteric control mediated by deoxynucleoside triphosphates and ATP binding to separate specificity and activation sites on the large subunit. The type of nucleotide bound at the specificity site determines substrate preference. It seems probable that ATP makes the enzyme reduce CDP and UDP, dGTP favors ADP reduction and dTTP favors GDP reduction. Stimulated by ATP and inhibited by dATP binding to the activity site. Functionally, provides the precursors necessary for DNA synthesis. Catalyzes the biosynthesis of deoxyribonucleotides from the corresponding ribonucleotides. The protein is Ribonucleoside-diphosphate reductase large chain 2 (RNR3) of Saccharomyces cerevisiae (strain ATCC 204508 / S288c) (Baker's yeast).